We begin with the raw amino-acid sequence, 186 residues long: Elongation factor P (186 aa).

It belongs to the elongation factor P family.

It is found in the cytoplasm. The protein operates within protein biosynthesis; polypeptide chain elongation. In terms of biological role, involved in peptide bond synthesis. Stimulates efficient translation and peptide-bond synthesis on native or reconstituted 70S ribosomes in vitro. Probably functions indirectly by altering the affinity of the ribosome for aminoacyl-tRNA, thus increasing their reactivity as acceptors for peptidyl transferase. The chain is Elongation factor P from Cupriavidus necator (strain ATCC 17699 / DSM 428 / KCTC 22496 / NCIMB 10442 / H16 / Stanier 337) (Ralstonia eutropha).